Reading from the N-terminus, the 59-residue chain is Inner kinetochore subunit fta6 (59 aa).

Component of the inner kinetochore constitutive centromere-associated network (CCAN) (also known as central kinetochore Sim4 complex in fission yeast), which is composed of at least cnl2, cnp3, cnp20, fta1, fta2, fta3, fta4, fta6, fta7, mal2, mhf1, mhf2, mis6, mis15, mis17, sim4 and wip1.

Its subcellular location is the nucleus. It is found in the chromosome. It localises to the centromere. The protein resides in the kinetochore. The protein localises to the cytoplasm. Its subcellular location is the cytoskeleton. It is found in the microtubule organizing center. It localises to the spindle pole body. Component of the kinetochore, a multiprotein complex that assembles on centromeric DNA and attaches chromosomes to spindle microtubules, mediating chromosome segregation and sister chromatid segregation during meiosis and mitosis. Component of the inner kinetochore constitutive centromere-associated network (CCAN), which serves as a structural platform for outer kinetochore assembly. The chain is Inner kinetochore subunit fta6 (fta6) from Schizosaccharomyces pombe (strain 972 / ATCC 24843) (Fission yeast).